Consider the following 23-residue polypeptide: Paralytic peptide 2 (23 aa).

Cys-7 and Cys-19 form a disulfide bridge.

This sequence belongs to the GBP/PSP1/paralytic peptide family. As to expression, hemolymph.

In terms of biological role, causes rapid, rigid paralysis when injected into Lepidopteran larvae. The physiological role may be to reduce hemolymph loss following injury and promote wound healing. The sequence is that of Paralytic peptide 2 from Manduca sexta (Tobacco hawkmoth).